A 464-amino-acid polypeptide reads, in one-letter code: Soluble pyridine nucleotide transhydrogenase (464 aa).

35-44 (DSRRQVGGNC) lines the FAD pocket.

This sequence belongs to the class-I pyridine nucleotide-disulfide oxidoreductase family. It depends on FAD as a cofactor.

It localises to the cytoplasm. It carries out the reaction NAD(+) + NADPH = NADH + NADP(+). Conversion of NADPH, generated by peripheral catabolic pathways, to NADH, which can enter the respiratory chain for energy generation. The protein is Soluble pyridine nucleotide transhydrogenase of Pseudomonas savastanoi pv. phaseolicola (strain 1448A / Race 6) (Pseudomonas syringae pv. phaseolicola (strain 1448A / Race 6)).